A 585-amino-acid polypeptide reads, in one-letter code: Putative lipase ATG15 (585 aa).

A helical; Signal-anchor for type II membrane protein transmembrane segment spans residues 1 to 21; that stretch reads MMGLDLLVSLLALSVSPCIAA. Residues 22-585 are Lumenal-facing; sequence TRSPLQIPVL…SASPPITSPP (564 aa). Asn171, Asn193, and Asn275 each carry an N-linked (GlcNAc...) asparagine glycan. Catalysis depends on Ser291, which acts as the Charge relay system. Asn340 and Asn437 each carry an N-linked (GlcNAc...) asparagine glycan. The tract at residues 500 to 526 is disordered; sequence TTTSTVPTASPAPTITPTSPPTTTAST.

Belongs to the AB hydrolase superfamily. Lipase family. As to quaternary structure, binds to both phosphatidylinositol (PI) and phosphatidylinositol 3,5-bisphosphate (PIP2).

It is found in the endosome. It localises to the multivesicular body membrane. The protein localises to the prevacuolar compartment membrane. The enzyme catalyses a triacylglycerol + H2O = a diacylglycerol + a fatty acid + H(+). In terms of biological role, lipase which is essential for lysis of subvacuolar cytoplasm to vacuole targeted bodies and intravacuolar autophagic bodies. Involved in the lysis of intravacuolar multivesicular body (MVB) vesicles. The intravacuolar membrane disintegration by ATG15 is critical to life span extension. This Ajellomyces capsulatus (strain NAm1 / WU24) (Darling's disease fungus) protein is Putative lipase ATG15 (ATG15).